The chain runs to 79 residues: MSAAEIKDKVYDIIVSKMGVNKDQITPESKFADDLGADSLDTVELIMELENEFGVQIPDEDAEKIGTVQQAIDYIVNKK.

In terms of domain architecture, Carrier spans 4-79 (AEIKDKVYDI…QAIDYIVNKK (76 aa)). Residue Ser39 is modified to O-(pantetheine 4'-phosphoryl)serine.

This sequence belongs to the acyl carrier protein (ACP) family. In terms of processing, 4'-phosphopantetheine is transferred from CoA to a specific serine of apo-ACP by AcpS. This modification is essential for activity because fatty acids are bound in thioester linkage to the sulfhydryl of the prosthetic group.

It is found in the cytoplasm. Its pathway is lipid metabolism; fatty acid biosynthesis. Functionally, carrier of the growing fatty acid chain in fatty acid biosynthesis. The chain is Acyl carrier protein from Chlorobaculum parvum (strain DSM 263 / NCIMB 8327) (Chlorobium vibrioforme subsp. thiosulfatophilum).